The following is a 224-amino-acid chain: 7-cyano-7-deazaguanine synthase (224 aa).

Position 12–22 (Leu12–Thr22) interacts with ATP. Zn(2+) contacts are provided by Cys193, Cys201, Cys204, and Cys207.

It belongs to the QueC family. Zn(2+) is required as a cofactor.

The catalysed reaction is 7-carboxy-7-deazaguanine + NH4(+) + ATP = 7-cyano-7-deazaguanine + ADP + phosphate + H2O + H(+). It functions in the pathway purine metabolism; 7-cyano-7-deazaguanine biosynthesis. Functionally, catalyzes the ATP-dependent conversion of 7-carboxy-7-deazaguanine (CDG) to 7-cyano-7-deazaguanine (preQ(0)). This is 7-cyano-7-deazaguanine synthase from Prochlorococcus marinus (strain MIT 9515).